The following is a 53-amino-acid chain: uncharacterized protein (53 aa).

The first 19 residues, 1-19 (MKLLTILILFYSFFMNLQA), serve as a signal peptide directing secretion.

This is an uncharacterized protein from Autographa californica nuclear polyhedrosis virus (AcMNPV).